Here is a 469-residue protein sequence, read N- to C-terminus: UDP-N-acetylmuramoylalanine--D-glutamate ligase (469 aa).

121 to 127 serves as a coordination point for ATP; sequence GTNGKST.

The protein belongs to the MurCDEF family.

The protein localises to the cytoplasm. It carries out the reaction UDP-N-acetyl-alpha-D-muramoyl-L-alanine + D-glutamate + ATP = UDP-N-acetyl-alpha-D-muramoyl-L-alanyl-D-glutamate + ADP + phosphate + H(+). It participates in cell wall biogenesis; peptidoglycan biosynthesis. In terms of biological role, cell wall formation. Catalyzes the addition of glutamate to the nucleotide precursor UDP-N-acetylmuramoyl-L-alanine (UMA). This chain is UDP-N-acetylmuramoylalanine--D-glutamate ligase, found in Rhodopseudomonas palustris (strain ATCC BAA-98 / CGA009).